The sequence spans 423 residues: p-aminobenzoyl-glutamate hydrolase subunit A homolog (423 aa).

The protein belongs to the peptidase M20 family. Mn(2+) serves as cofactor.

In terms of biological role, catalyzes the cleavage of p-aminobenzoyl-glutamate (PABA-GLU) to form p-aminobenzoate (PABA) and glutamate. The protein is p-aminobenzoyl-glutamate hydrolase subunit A homolog (abgA) of Haemophilus influenzae (strain ATCC 51907 / DSM 11121 / KW20 / Rd).